The sequence spans 207 residues: 3-demethoxyubiquinol 3-hydroxylase (207 aa).

Basic and acidic residues predominate over residues Glu22–Pro32. Residues Glu22–Glu41 form a disordered region. 6 residues coordinate Fe cation: Glu56, Glu86, His89, Glu138, Glu170, and His173.

This sequence belongs to the COQ7 family. Fe cation is required as a cofactor.

The protein resides in the cell membrane. It catalyses the reaction a 5-methoxy-2-methyl-3-(all-trans-polyprenyl)benzene-1,4-diol + AH2 + O2 = a 3-demethylubiquinol + A + H2O. The protein operates within cofactor biosynthesis; ubiquinone biosynthesis. Catalyzes the hydroxylation of 2-nonaprenyl-3-methyl-6-methoxy-1,4-benzoquinol during ubiquinone biosynthesis. The sequence is that of 3-demethoxyubiquinol 3-hydroxylase from Cupriavidus metallidurans (strain ATCC 43123 / DSM 2839 / NBRC 102507 / CH34) (Ralstonia metallidurans).